A 335-amino-acid chain; its full sequence is Holliday junction branch migration complex subunit RuvB (335 aa).

The segment at 1 to 181 is large ATPase domain (RuvB-L); sequence MSERVISPEP…FGLLIRLNLY (181 aa). ATP is bound by residues Leu-20, Arg-21, Gly-62, Lys-65, Thr-66, Thr-67, 128-130, Arg-171, Tyr-181, and Arg-218; that span reads EDF. Residue Thr-66 coordinates Mg(2+). The segment at 182-252 is small ATPAse domain (RuvB-S); it reads SPEDLEKIVT…IAGAGLALLQ (71 aa). The head domain (RuvB-H) stretch occupies residues 255-335; it reads ELGLDDIDRR…KLNHSQKTLF (81 aa). Positions 310 and 315 each coordinate DNA.

This sequence belongs to the RuvB family. Homohexamer. Forms an RuvA(8)-RuvB(12)-Holliday junction (HJ) complex. HJ DNA is sandwiched between 2 RuvA tetramers; dsDNA enters through RuvA and exits via RuvB. An RuvB hexamer assembles on each DNA strand where it exits the tetramer. Each RuvB hexamer is contacted by two RuvA subunits (via domain III) on 2 adjacent RuvB subunits; this complex drives branch migration. In the full resolvosome a probable DNA-RuvA(4)-RuvB(12)-RuvC(2) complex forms which resolves the HJ.

The protein localises to the cytoplasm. The catalysed reaction is ATP + H2O = ADP + phosphate + H(+). In terms of biological role, the RuvA-RuvB-RuvC complex processes Holliday junction (HJ) DNA during genetic recombination and DNA repair, while the RuvA-RuvB complex plays an important role in the rescue of blocked DNA replication forks via replication fork reversal (RFR). RuvA specifically binds to HJ cruciform DNA, conferring on it an open structure. The RuvB hexamer acts as an ATP-dependent pump, pulling dsDNA into and through the RuvAB complex. RuvB forms 2 homohexamers on either side of HJ DNA bound by 1 or 2 RuvA tetramers; 4 subunits per hexamer contact DNA at a time. Coordinated motions by a converter formed by DNA-disengaged RuvB subunits stimulates ATP hydrolysis and nucleotide exchange. Immobilization of the converter enables RuvB to convert the ATP-contained energy into a lever motion, pulling 2 nucleotides of DNA out of the RuvA tetramer per ATP hydrolyzed, thus driving DNA branch migration. The RuvB motors rotate together with the DNA substrate, which together with the progressing nucleotide cycle form the mechanistic basis for DNA recombination by continuous HJ branch migration. Branch migration allows RuvC to scan DNA until it finds its consensus sequence, where it cleaves and resolves cruciform DNA. This Methanoregula boonei (strain DSM 21154 / JCM 14090 / 6A8) protein is Holliday junction branch migration complex subunit RuvB.